We begin with the raw amino-acid sequence, 1407 residues long: DNA-directed RNA polymerase subunit beta' (1407 aa).

Residues cysteine 70, cysteine 72, cysteine 85, and cysteine 88 each coordinate Zn(2+). Aspartate 460, aspartate 462, and aspartate 464 together coordinate Mg(2+). 4 residues coordinate Zn(2+): cysteine 814, cysteine 888, cysteine 895, and cysteine 898. N6-acetyllysine is present on lysine 972.

The protein belongs to the RNA polymerase beta' chain family. As to quaternary structure, the RNAP catalytic core consists of 2 alpha, 1 beta, 1 beta' and 1 omega subunit. When a sigma factor is associated with the core the holoenzyme is formed, which can initiate transcription. The cofactor is Mg(2+). Zn(2+) serves as cofactor.

It catalyses the reaction RNA(n) + a ribonucleoside 5'-triphosphate = RNA(n+1) + diphosphate. Functionally, DNA-dependent RNA polymerase catalyzes the transcription of DNA into RNA using the four ribonucleoside triphosphates as substrates. In Escherichia coli (strain SMS-3-5 / SECEC), this protein is DNA-directed RNA polymerase subunit beta'.